A 555-amino-acid chain; its full sequence is Probable portal protein (555 aa).

Belongs to the podoviridae head-to-tail connector protein family. Homododecamer.

The protein localises to the virion. Functionally, forms the portal vertex of the capsid. This portal plays critical roles in head assembly, genome packaging, neck/tail attachment, and genome ejection. The portal protein multimerizes as a single ring-shaped homododecamer arranged around a central channel. The sequence is that of Probable portal protein from Bordetella bronchiseptica (Alcaligenes bronchisepticus).